The primary structure comprises 78 residues: Antitoxin VapB1 (78 aa).

In terms of domain architecture, SpoVT-AbrB spans 3–44; it reads TKVFQSGNSQAVRIPMDFRFDVDTVEIFRKENGDVVLRPVSK.

The protein belongs to the VapB family. In terms of assembly, forms multimers, as well forming as a complex with VapC1.

Functionally, antitoxin component of a type II toxin-antitoxin (TA) system. Upon expression in E.coli neutralizes the effect of toxin VapC1. In vitro inhibits the RNase activity of VapC1. This is Antitoxin VapB1 (vapB1) from Haemophilus influenzae (strain R2866).